The sequence spans 344 residues: L-rhamnose-proton symporter (344 aa).

The next 10 helical transmembrane spans lie at Ala-4–Ala-24, Trp-38–Leu-58, Phe-68–Ile-88, Met-101–Ile-121, Thr-137–Leu-157, Leu-175–Ala-195, Leu-214–Ile-234, Val-259–Gly-279, Ile-290–Leu-310, and Val-323–Ala-343.

It belongs to the L-rhamnose transporter (TC 2.A.7.6) family.

The protein resides in the cell inner membrane. It carries out the reaction L-rhamnopyranose(in) + H(+)(in) = L-rhamnopyranose(out) + H(+)(out). Functionally, uptake of L-rhamnose across the cytoplasmic membrane with the concomitant transport of protons into the cell (symport system). The chain is L-rhamnose-proton symporter from Escherichia coli O1:K1 / APEC.